The sequence spans 204 residues: GTP cyclohydrolase-2 (204 aa).

49–53 contributes to the GTP binding site; it reads RIHSE. Cysteine 54, cysteine 65, and cysteine 67 together coordinate Zn(2+). GTP-binding positions include glutamine 70, 92–94, and threonine 114; that span reads EGR. The active-site Proton acceptor is aspartate 126. Residue arginine 128 is the Nucleophile of the active site. GTP is bound by residues threonine 149 and lysine 154.

Belongs to the GTP cyclohydrolase II family. Zn(2+) is required as a cofactor.

It carries out the reaction GTP + 4 H2O = 2,5-diamino-6-hydroxy-4-(5-phosphoribosylamino)-pyrimidine + formate + 2 phosphate + 3 H(+). It participates in cofactor biosynthesis; riboflavin biosynthesis; 5-amino-6-(D-ribitylamino)uracil from GTP: step 1/4. In terms of biological role, catalyzes the conversion of GTP to 2,5-diamino-6-ribosylamino-4(3H)-pyrimidinone 5'-phosphate (DARP), formate and pyrophosphate. The sequence is that of GTP cyclohydrolase-2 from Shewanella baltica (strain OS223).